The following is a 935-amino-acid chain: Dual 3',5'-cyclic-AMP and -GMP phosphodiesterase 11A (935 aa).

The segment at 41–125 is disordered; it reads RHSSGQGASD…ASQKELRKSF (85 aa). A compositionally biased stretch (low complexity) spans 54–69; the sequence is ALAGASSLAQSSARGS. 3 positions are modified to phosphoserine: Ser-162, Ser-163, and Ser-239. 2 consecutive GAF domains span residues 217–370 and 402–558; these read DLTS…GIAI and DLEK…GLGI. A 3',5'-cyclic GMP-binding site is contributed by Ser-424. Residues 588–912 enclose the PDEase domain; that stretch reads SKAEVDKFKA…RKWEELHQKR (325 aa). The Proton donor role is filled by His-664. Residues His-668, His-704, Asp-705, and Asp-816 each coordinate a divalent metal cation. The disordered stretch occupies residues 915–935; it reads VSAASPVPSSPSPAVAGEDRL.

This sequence belongs to the cyclic nucleotide phosphodiesterase family. A divalent metal cation is required as a cofactor. As to expression, isoform 1 is expressed in brain, heart, kidney and liver, but not in prostate. Isoform 2 is specifically expressed in testis. Isoform 3 is expressed in various tissues including brain, lung, skeletal muscle, spleen, testis and prostate.

The protein resides in the cytoplasm. Its subcellular location is the cytosol. The catalysed reaction is 3',5'-cyclic GMP + H2O = GMP + H(+). It carries out the reaction 3',5'-cyclic AMP + H2O = AMP + H(+). With respect to regulation, inhibited by 3-isobutyl-1-methylxanthine (IBMX), zaprinast and dipyridamole. cGMP acts as an allosteric activator. Plays a role in signal transduction by regulating the intracellular concentration of cyclic nucleotides cAMP and cGMP. Catalyzes the hydrolysis of both cAMP and cGMP to 5'-AMP and 5'-GMP, respectively. This chain is Dual 3',5'-cyclic-AMP and -GMP phosphodiesterase 11A, found in Rattus norvegicus (Rat).